The primary structure comprises 482 residues: uncharacterized protein (482 aa).

WD repeat units lie at residues 92-133 and 191-230; these read DMPN…REPI and GHEH…CLCK.

The protein localises to the cytoplasm. It localises to the nucleus. This is an uncharacterized protein from Schizosaccharomyces pombe (strain 972 / ATCC 24843) (Fission yeast).